The sequence spans 463 residues: Matrix remodeling-associated protein 8 (463 aa).

An N-terminal signal peptide occupies residues 1–19 (MELRAWVLLWRLVLLQSSA). The Extracellular segment spans residues 20–362 (VLLSSGPSGP…PEGRAHFFQQ (343 aa)). Ig-like V-type domains are found at residues 29 to 173 (PATS…LEVT) and 176 to 308 (PRAA…LRVT). Disulfide bonds link Cys54-Cys153 and Cys202-Cys288. N-linked (GlcNAc...) asparagine glycosylation is present at Asn135. A Phosphoserine modification is found at Ser244. The short motif at 268-270 (RGD) is the RGD element. The tract at residues 309 to 341 (EPAARPPPPPRDSPGNGSSHSGAPGPGARDPTL) is disordered. Over residues 321–335 (SPGNGSSHSGAPGPG) the composition is skewed to low complexity. N-linked (GlcNAc...) asparagine glycosylation occurs at Asn324. Residues 363–383 (LGYVLATLLLFILLLITVVLA) traverse the membrane as a helical segment. Topologically, residues 384–463 (TRQRRRGGYE…DKEFRKEYCK (80 aa)) are cytoplasmic.

As to quaternary structure, homodimer in cis. Does not appear to form trans-homodimers. Interacts with ITGB3; the interaction inhibits ITGAV:ITGB3 heterodimer formation.

Its subcellular location is the cell membrane. The protein localises to the cell junction. It localises to the tight junction. It is found in the cytoplasm. The protein resides in the cell projection. Its subcellular location is the cilium membrane. The protein localises to the nucleus. Functionally, transmembrane protein which can modulate activity of various signaling pathways, probably via binding to integrin ITGAV:ITGB3. Mediates heterophilic cell-cell interactions in vitro. Inhibits osteoclastogenesis downstream of TNFSF11/RANKL and CSF1, where it may function by attenuating signaling via integrin ITGB3 and MAP kinase p38. Plays a role in cartilage formation where it promotes proliferation and maturation of growth plate chondrocytes. Stimulates formation of primary cilia in chondrocytes. Enhances expression of genes involved in the hedgehog signaling pathway in chondrocytes, including the hedgehog signaling molecule IHH; may also promote signaling via the PTHLH/PTHrP pathway. Plays a role in angiogenesis where it suppresses migration of endothelial cells and also promotes their apoptosis. Inhibits VEGF-induced activation of AKT and p38 MAP kinase in endothelial cells. Also inhibits VTN (vitronectin)-mediated integrin ITGAV:ITGB3 signaling and activation of PTK2/FAK. May play a role in the maturation and maintenance of the blood-brain barrier. This chain is Matrix remodeling-associated protein 8 (MXRA8), found in Bos taurus (Bovine).